Here is a 664-residue protein sequence, read N- to C-terminus: Sulfoquinovosidase (664 aa).

Positions 135, 270, 283, 284, and 286 each coordinate 3-(6-sulfo-alpha-D-quinovosyl)glycerol. Catalysis depends on Asp-388, which acts as the Nucleophile. Glu-391 is an active-site residue. Arg-438 is a 3-(6-sulfo-alpha-D-quinovosyl)glycerol binding site. Asp-455 serves as the catalytic Proton donor. His-520 is a binding site for 3-(6-sulfo-alpha-D-quinovosyl)glycerol.

The protein belongs to the glycosyl hydrolase 31 family.

It carries out the reaction 3-(6-sulfo-alpha-D-quinovosyl)glycerol + H2O = 6-sulfo-alpha-D-quinovose + glycerol. Its function is as follows. Part of the sulfoquinovose monooxygenase (sulfo-SMO) pathway, a D-sulfoquinovose degradation pathway that enables the complete utilization of all carbons within sulfoquinovose (SQ) with concomitant production of inorganic sulfite. Catalyzes the first step of the pathway, the hydrolysis of sulfoquinovosyl glycerol (SQGro) to release sulfoquinovose (SQ). Hydrolyzes both epimers of SQGro, with a preference for the natural 2'R isomer. In vitro, can use the substrate analog para-nitrophenyl alpha-sulfoquinovoside (PNPSQ), but shows no detectable activity toward 4-nitrophenyl alpha-D-glucopyranoside (PNPGlc). The chain is Sulfoquinovosidase from Agrobacterium fabrum (strain C58 / ATCC 33970) (Agrobacterium tumefaciens (strain C58)).